Here is a 396-residue protein sequence, read N- to C-terminus: Putative N(4)-(beta-N-acetylglucosaminyl)-L-asparaginase GE19290 (396 aa).

The N-terminal stretch at Met1–Ala23 is a signal peptide. Intrachain disulfides connect Cys100–Cys105 and Cys199–Cys215. Thr246 acts as the Nucleophile in catalysis. Residues Arg274 to Asp277 and Thr297 to Gly300 each bind substrate. An intrachain disulfide couples Cys357 to Cys384.

It belongs to the Ntn-hydrolase family. As to quaternary structure, heterotetramer of two alpha and two beta chains arranged as a dimer of alpha/beta heterodimers. Cleaved into an alpha and beta chain by autocatalysis; this activates the enzyme. The N-terminal residue of the beta subunit is responsible for the nucleophile hydrolase activity.

It catalyses the reaction N(4)-(beta-N-acetyl-D-glucosaminyl)-L-asparagine + H2O = N-acetyl-beta-D-glucosaminylamine + L-aspartate + H(+). Cleaves the GlcNAc-Asn bond which joins oligosaccharides to the peptide of asparagine-linked glycoproteins. The polypeptide is Putative N(4)-(beta-N-acetylglucosaminyl)-L-asparaginase GE19290 (Drosophila yakuba (Fruit fly)).